A 336-amino-acid chain; its full sequence is Coproporphyrin III ferrochelatase (336 aa).

Fe-coproporphyrin III-binding residues include serine 52 and tyrosine 116. Positions 176 and 259 each coordinate Fe(2+).

Belongs to the ferrochelatase family.

The protein localises to the cytoplasm. It carries out the reaction Fe-coproporphyrin III + 2 H(+) = coproporphyrin III + Fe(2+). The protein operates within porphyrin-containing compound metabolism; protoheme biosynthesis. In terms of biological role, involved in coproporphyrin-dependent heme b biosynthesis. Catalyzes the insertion of ferrous iron into coproporphyrin III to form Fe-coproporphyrin III. The chain is Coproporphyrin III ferrochelatase from Mycobacterium leprae (strain Br4923).